Reading from the N-terminus, the 306-residue chain is MRVVFMGTPEFSVPILTAIIGHGYEVVAAYTQPPRPAGRRGLELTRSPVHEKAEQFGIPVFTPKSLKGAEEQDVFASLKADVAIVVAYGLLLPKAILDAPRLGCYNGHASLLPRWRGAAPIQRAIMAGDAETGMMIMKMDEGLDTGPVAMAEKVAITPDMTAGELHDRLSMIGADLMIRALGALERESLALQPQAEEGVTYAAKIDKAEARIDWSKPAKDVHNSIRGLSPFPGAWCEMEINGAVERVKLQRSTLGEGSGAPGTVLDDRLTIACGEGAVRLATLQRSGGKPLPAQEFLRGQRVTKVL.

A (6S)-5,6,7,8-tetrahydrofolate-binding site is contributed by Ser110–Pro113.

Belongs to the Fmt family.

The enzyme catalyses L-methionyl-tRNA(fMet) + (6R)-10-formyltetrahydrofolate = N-formyl-L-methionyl-tRNA(fMet) + (6S)-5,6,7,8-tetrahydrofolate + H(+). Attaches a formyl group to the free amino group of methionyl-tRNA(fMet). The formyl group appears to play a dual role in the initiator identity of N-formylmethionyl-tRNA by promoting its recognition by IF2 and preventing the misappropriation of this tRNA by the elongation apparatus. The protein is Methionyl-tRNA formyltransferase of Brucella melitensis biotype 2 (strain ATCC 23457).